A 622-amino-acid chain; its full sequence is Low affinity potassium transport system protein Kup (622 aa).

Transmembrane regions (helical) follow at residues 9-29, 49-69, 101-121, 137-157, 163-183, 213-233, 247-267, 276-296, 337-357, 363-383, 395-415, and 419-439; these read LPAL…TSPL, VFGF…IKYI, VLVI…VITP, PQLD…LFVI, GMVG…LAVL, VSFI…ALYA, WFSV…ALLL, PFFL…ATLA, IYIP…IVSF, LAAA…ILSA, LFVG…FSAN, and IVSG…VMTT.

Belongs to the HAK/KUP transporter (TC 2.A.72) family.

The protein localises to the cell inner membrane. The enzyme catalyses K(+)(in) + H(+)(in) = K(+)(out) + H(+)(out). In terms of biological role, responsible for the low-affinity transport of potassium into the cell. Likely operates as a K(+):H(+) symporter. The polypeptide is Low affinity potassium transport system protein Kup (Klebsiella pneumoniae subsp. pneumoniae (strain ATCC 700721 / MGH 78578)).